A 716-amino-acid polypeptide reads, in one-letter code: Phosphoribosylformylglycinamidine synthase subunit PurL (716 aa).

His-34 is an active-site residue. Tyr-37 lines the ATP pocket. Glu-78 serves as a coordination point for Mg(2+). Residues 79–82 and Arg-101 each bind substrate; that span reads SHNH. His-80 serves as the catalytic Proton acceptor. Position 102 (Asp-102) interacts with Mg(2+). Gln-226 provides a ligand contact to substrate. Asp-254 provides a ligand contact to Mg(2+). 298–300 contacts substrate; it reads ESQ. ATP contacts are provided by Asp-474 and Gly-511. Mg(2+) is bound at residue Asn-512. Residue Ser-514 participates in substrate binding.

Belongs to the FGAMS family. In terms of assembly, monomer. Part of the FGAM synthase complex composed of 1 PurL, 1 PurQ and 2 PurS subunits.

The protein localises to the cytoplasm. The enzyme catalyses N(2)-formyl-N(1)-(5-phospho-beta-D-ribosyl)glycinamide + L-glutamine + ATP + H2O = 2-formamido-N(1)-(5-O-phospho-beta-D-ribosyl)acetamidine + L-glutamate + ADP + phosphate + H(+). It participates in purine metabolism; IMP biosynthesis via de novo pathway; 5-amino-1-(5-phospho-D-ribosyl)imidazole from N(2)-formyl-N(1)-(5-phospho-D-ribosyl)glycinamide: step 1/2. In terms of biological role, part of the phosphoribosylformylglycinamidine synthase complex involved in the purines biosynthetic pathway. Catalyzes the ATP-dependent conversion of formylglycinamide ribonucleotide (FGAR) and glutamine to yield formylglycinamidine ribonucleotide (FGAM) and glutamate. The FGAM synthase complex is composed of three subunits. PurQ produces an ammonia molecule by converting glutamine to glutamate. PurL transfers the ammonia molecule to FGAR to form FGAM in an ATP-dependent manner. PurS interacts with PurQ and PurL and is thought to assist in the transfer of the ammonia molecule from PurQ to PurL. The protein is Phosphoribosylformylglycinamidine synthase subunit PurL of Methanobrevibacter smithii (strain ATCC 35061 / DSM 861 / OCM 144 / PS).